An 87-amino-acid polypeptide reads, in one-letter code: Putative phytosulfokines 4 (87 aa).

The first 23 residues, 1–23 (MANLSTLITIALLLCATMLTCSA), serve as a signal peptide directing secretion. A propeptide spanning residues 24 to 77 (RPEPAYFASFTTSPADTLSLEMIESKLHEVAGESCDKEDDEDCLVRRTLTAHLD) is cleaved from the precursor. A sulfotyrosine mark is found at Tyr-78 and Tyr-80. Residues 83 to 87 (KNNHH) constitute a propeptide that is removed on maturation.

This sequence belongs to the phytosulfokine family. Sulfation is important for activity and for the binding to a putative membrane receptor.

It is found in the secreted. Functionally, promotes plant cell differentiation, organogenesis and somatic embryogenesis as well as cell proliferation. The sequence is that of Putative phytosulfokines 4 (PSK4) from Arabidopsis thaliana (Mouse-ear cress).